A 461-amino-acid polypeptide reads, in one-letter code: Glutamate--tRNA ligase (461 aa).

The 'HIGH' region motif lies at 8–18 (PSPTGYLHIGG). The short motif at 240 to 244 (KMSKR) is the 'KMSKS' region element. K243 lines the ATP pocket.

This sequence belongs to the class-I aminoacyl-tRNA synthetase family. Glutamate--tRNA ligase type 1 subfamily. As to quaternary structure, monomer.

It localises to the cytoplasm. It catalyses the reaction tRNA(Glu) + L-glutamate + ATP = L-glutamyl-tRNA(Glu) + AMP + diphosphate. Catalyzes the attachment of glutamate to tRNA(Glu) in a two-step reaction: glutamate is first activated by ATP to form Glu-AMP and then transferred to the acceptor end of tRNA(Glu). The chain is Glutamate--tRNA ligase from Chromobacterium violaceum (strain ATCC 12472 / DSM 30191 / JCM 1249 / CCUG 213 / NBRC 12614 / NCIMB 9131 / NCTC 9757 / MK).